Consider the following 520-residue polypeptide: GMP synthase [glutamine-hydrolyzing] (520 aa).

The Glutamine amidotransferase type-1 domain maps to 12–205 (KIIVLDYGSQ…AISICGARGD (194 aa)). Cysteine 89 acts as the Nucleophile in catalysis. Catalysis depends on residues histidine 179 and glutamate 181. The GMPS ATP-PPase domain maps to 206-395 (WSMDNFIDME…LGMPEEIVWR (190 aa)). ATP is bound at residue 233 to 239 (SGGVDSS).

As to quaternary structure, homodimer.

It carries out the reaction XMP + L-glutamine + ATP + H2O = GMP + L-glutamate + AMP + diphosphate + 2 H(+). It functions in the pathway purine metabolism; GMP biosynthesis; GMP from XMP (L-Gln route): step 1/1. Functionally, catalyzes the synthesis of GMP from XMP. The chain is GMP synthase [glutamine-hydrolyzing] from Streptococcus pyogenes serotype M1.